A 224-amino-acid polypeptide reads, in one-letter code: MLLKDLPEDARPREKLLARGPAALSDAELLALLLRTGLPGKNALQMGQELVDTFGGVAGLLHTGPEALKSIKGLGPAKRAELVAVLELARRALAEELKEKALFSTPQAVRDYLQLQLGGRPHEIFAVLFLDSQHRLIALEELFRGTLTQTSVYPREVVVRALALNAASVVLAHNHPSGAATPSRADEALTQTLKSALALVDVRVLDHFVVTSTQAVSMAELGLL.

The MPN domain maps to 102-224 (LFSTPQAVRD…AVSMAELGLL (123 aa)). The Zn(2+) site is built by histidine 173, histidine 175, and aspartate 186. Residues 173 to 186 (HNHPSGAATPSRAD) carry the JAMM motif motif.

This sequence belongs to the UPF0758 family.

The chain is UPF0758 protein Bpro_0948 from Polaromonas sp. (strain JS666 / ATCC BAA-500).